A 402-amino-acid chain; its full sequence is LIM/homeobox protein Lhx5 (402 aa).

LIM zinc-binding domains lie at valine 3–glycine 61 and threonine 62–leucine 125. The segment covering serine 124–serine 135 has biased composition (low complexity). 2 disordered regions span residues serine 124–threonine 186 and histidine 298–tryptophan 402. Positions aspartate 151–alanine 167 are enriched in basic and acidic residues. Positions arginine 180–lysine 239 form a DNA-binding region, homeobox. 2 stretches are compositionally biased toward low complexity: residues proline 300–serine 311 and proline 322–alanine 336.

In terms of tissue distribution, expressed in fetal brain and in various regions of the adult central nervous system including the spinal cord, the thalamus, and the cerebellum.

The protein resides in the nucleus. In terms of biological role, plays an essential role in the regulation of neuronal differentiation and migration during development of the central nervous system. The polypeptide is LIM/homeobox protein Lhx5 (LHX5) (Homo sapiens (Human)).